Here is a 218-residue protein sequence, read N- to C-terminus: Glutathione S-transferase class-mu 26 kDa isozyme 7 (218 aa).

The region spanning Pro-2–Gly-83 is the GST N-terminal domain. Glutathione is bound by residues Tyr-7–Trp-8, Trp-41–Lys-45, Asn-54–Leu-55, and Gln-67–Ser-68. Residues Thr-85–Leu-203 enclose the GST C-terminal domain. Tyr-111 provides a ligand contact to substrate.

This sequence belongs to the GST superfamily. Mu family. Homodimer.

It carries out the reaction RX + glutathione = an S-substituted glutathione + a halide anion + H(+). In terms of biological role, conjugation of reduced glutathione to a wide number of exogenous and endogenous hydrophobic electrophiles. Its function is as follows. GST isoenzymes appear to play a central role in the parasite detoxification system. Other functions are also suspected including a role in increasing the solubility of haematin in the parasite gut. The protein is Glutathione S-transferase class-mu 26 kDa isozyme 7 of Fasciola hepatica (Liver fluke).